The following is a 315-amino-acid chain: MGFMIEHWDFSTPMATQETTTAEHIQPNHWYHCERLHPDIRSWLEDNHVPRATVDHLLADESRPSFHPLDDDNFMLILRGINMNENASPEDMLSIRILYFQGALISTRKIPSRAIMEIRQALAEHKGPKSLASLLNQIIEGLNGKIDLYLDTIEETLNEFDVNDESTYNHIAAQKALISIKRFIRPQQYAIRDLIESESELVTSRPHQYRFAHNNITRINETIEFYLGEVALFQDEIKHNRDEKTNKNSYLFTLVATIFLPTSFLTGLLGINIGGMPGVESSMAFTWFCIALIVIFGLEWLLFKRLGFTNKTDDE.

Topologically, residues 1 to 250 are cytoplasmic; that stretch reads MGFMIEHWDF…RDEKTNKNSY (250 aa). The helical transmembrane segment at 251 to 271 threads the bilayer; sequence LFTLVATIFLPTSFLTGLLGI. The Periplasmic segment spans residues 272–282; that stretch reads NIGGMPGVESS. A helical transmembrane segment spans residues 283–303; sequence MAFTWFCIALIVIFGLEWLLF. The Cytoplasmic segment spans residues 304-315; it reads KRLGFTNKTDDE.

This sequence belongs to the CorA metal ion transporter (MIT) (TC 1.A.35) family. Homopentamer. Can assemble pentamers in the absence of the transmembrane regions.

The protein localises to the cell inner membrane. It catalyses the reaction Zn(2+)(out) + H(+)(out) = Zn(2+)(in) + H(+)(in). Zinc transporter. Acts as a Zn(2+):proton symporter, which likely mediates zinc ion uptake. In Vibrio parahaemolyticus serotype O3:K6 (strain RIMD 2210633), this protein is Zinc transport protein ZntB.